We begin with the raw amino-acid sequence, 127 residues long: Protein HI_1253 (127 aa).

Transmembrane regions (helical) follow at residues 13-33, 61-81, 82-102, and 107-127; these read VIMLVHLHIFFAFLSLALLVI, LIVSGVVILYLFAFGIEWWLV, AKFALLILYIVFAAKFFSKKV, and SIFFWLACVSFIGAMLIAYLK.

The protein belongs to the SirB2 family.

The protein localises to the cell inner membrane. In Haemophilus influenzae (strain ATCC 51907 / DSM 11121 / KW20 / Rd), this protein is Protein HI_1253.